Here is a 367-residue protein sequence, read N- to C-terminus: Aurora kinase (367 aa).

The interval 30-49 is disordered; the sequence is TTATNGAPPQARVQPGKGYR. Positions 109–360 constitute a Protein kinase domain; that stretch reads FEIGKVLGKG…LKEVKKHPWI (252 aa). Residues 115–123 and Lys-138 each bind ATP; that span reads LGKGKFGRV. Asp-232 functions as the Proton acceptor in the catalytic mechanism.

It belongs to the protein kinase superfamily. Ser/Thr protein kinase family. Aurora subfamily.

It localises to the nucleus. It is found in the cytoplasm. The protein resides in the cytoskeleton. The protein localises to the spindle. Its subcellular location is the chromosome. It localises to the centromere. It is found in the kinetochore. It carries out the reaction L-seryl-[protein] + ATP = O-phospho-L-seryl-[protein] + ADP + H(+). The catalysed reaction is L-threonyl-[protein] + ATP = O-phospho-L-threonyl-[protein] + ADP + H(+). Its function is as follows. Component of the chromosomal passenger complex (CPC), a complex that acts as a key regulator of chromosome segregation and cytokinesis. Has a role in error-correction of aberrent kinetochore-microtubule attachments to ensure that sister kinetochores become bioriented and connect to opposite poles by promoting spindle assembly checkpoint signaling. In Eremothecium gossypii (strain ATCC 10895 / CBS 109.51 / FGSC 9923 / NRRL Y-1056) (Yeast), this protein is Aurora kinase (IPL1).